The following is a 172-amino-acid chain: Large ribosomal subunit protein uL10 (172 aa).

It belongs to the universal ribosomal protein uL10 family. Part of the ribosomal stalk of the 50S ribosomal subunit. The N-terminus interacts with L11 and the large rRNA to form the base of the stalk. The C-terminus forms an elongated spine to which L12 dimers bind in a sequential fashion forming a multimeric L10(L12)X complex.

Functionally, forms part of the ribosomal stalk, playing a central role in the interaction of the ribosome with GTP-bound translation factors. This Clostridium tetani (strain Massachusetts / E88) protein is Large ribosomal subunit protein uL10.